We begin with the raw amino-acid sequence, 595 residues long: Prolycopene isomerase, chloroplastic (595 aa).

A chloroplast-targeting transit peptide spans 1–56; that stretch reads MDLCFQNPVKCGDRLFSALNTSTYYKLGTSNLGFNGPVLENRKKKKKLPRMVTVKS. V57 is subject to N-acetylvaline.

Belongs to the carotenoid/retinoid oxidoreductase family. CrtISO subfamily. NAD(+) serves as cofactor. It depends on NADP(+) as a cofactor. The cofactor is FAD.

It localises to the plastid. The protein resides in the chloroplast membrane. It carries out the reaction 7,7',9,9'-tetra-cis-lycopene = all-trans-lycopene. It functions in the pathway carotenoid biosynthesis; lycopene biosynthesis. Carotene cis-trans-isomerase that converts 7,9,9'-tri-cis-neurosporene to 9'-cis-neurosporene and 7,9,9',7'-tetra-cis-lycopene (also known as prolycopene) into all-trans-lycopene. Isomerization requires redox-active components, suggesting that isomerization is achieved by a reversible redox reaction acting at specific double bonds. Isomerizes adjacent cis-double bonds at C7 and C9 pairwise into the trans-configuration, but is incapable of isomerizing single cis-double bonds at C9 and C9'. Carotenoid biosynthesis is partly required to form the prolamellar bodies of etioplasts. The chain is Prolycopene isomerase, chloroplastic (CRTISO) from Arabidopsis thaliana (Mouse-ear cress).